The chain runs to 485 residues: Glutamate--tRNA ligase (485 aa).

The 'HIGH' region signature appears at 12-22; the sequence is PSPTGYMHIGN. The 'KMSKS' region signature appears at 253–257; it reads KLSKR. Lysine 256 contributes to the ATP binding site.

The protein belongs to the class-I aminoacyl-tRNA synthetase family. Glutamate--tRNA ligase type 1 subfamily. As to quaternary structure, monomer.

Its subcellular location is the cytoplasm. It carries out the reaction tRNA(Glu) + L-glutamate + ATP = L-glutamyl-tRNA(Glu) + AMP + diphosphate. Its function is as follows. Catalyzes the attachment of glutamate to tRNA(Glu) in a two-step reaction: glutamate is first activated by ATP to form Glu-AMP and then transferred to the acceptor end of tRNA(Glu). The polypeptide is Glutamate--tRNA ligase (Clostridium acetobutylicum (strain ATCC 824 / DSM 792 / JCM 1419 / IAM 19013 / LMG 5710 / NBRC 13948 / NRRL B-527 / VKM B-1787 / 2291 / W)).